The following is a 537-amino-acid chain: Lysine--tRNA ligase (537 aa).

Residues Pro30 to Asn38 carry the 'HIGH' region motif. The 'KMSKS' region signature appears at Ala276–Ser280.

This sequence belongs to the class-I aminoacyl-tRNA synthetase family.

The protein localises to the cytoplasm. The enzyme catalyses tRNA(Lys) + L-lysine + ATP = L-lysyl-tRNA(Lys) + AMP + diphosphate. The protein is Lysine--tRNA ligase of Methanosarcina barkeri.